Here is a 390-residue protein sequence, read N- to C-terminus: ATP phosphoribosyltransferase regulatory subunit (390 aa).

This sequence belongs to the class-II aminoacyl-tRNA synthetase family. HisZ subfamily. As to quaternary structure, heteromultimer composed of HisG and HisZ subunits.

The protein localises to the cytoplasm. Its pathway is amino-acid biosynthesis; L-histidine biosynthesis; L-histidine from 5-phospho-alpha-D-ribose 1-diphosphate: step 1/9. Functionally, required for the first step of histidine biosynthesis. May allow the feedback regulation of ATP phosphoribosyltransferase activity by histidine. This Bacillus velezensis (strain DSM 23117 / BGSC 10A6 / LMG 26770 / FZB42) (Bacillus amyloliquefaciens subsp. plantarum) protein is ATP phosphoribosyltransferase regulatory subunit.